Consider the following 593-residue polypeptide: NADH-quinone oxidoreductase subunit C/D (593 aa).

Residues 1-184 form an NADH dehydrogenase I subunit C region; it reads MTADNAIFIP…DPYSLTLAKQ (184 aa). An NADH dehydrogenase I subunit D region spans residues 208–593; the sequence is DYMFLNLGPN…IDFVMADVDR (386 aa).

It in the N-terminal section; belongs to the complex I 30 kDa subunit family. The protein in the C-terminal section; belongs to the complex I 49 kDa subunit family. NDH-1 is composed of 13 different subunits. Subunits NuoB, CD, E, F, and G constitute the peripheral sector of the complex.

Its subcellular location is the cell inner membrane. The catalysed reaction is a quinone + NADH + 5 H(+)(in) = a quinol + NAD(+) + 4 H(+)(out). NDH-1 shuttles electrons from NADH, via FMN and iron-sulfur (Fe-S) centers, to quinones in the respiratory chain. The immediate electron acceptor for the enzyme in this species is believed to be ubiquinone. Couples the redox reaction to proton translocation (for every two electrons transferred, four hydrogen ions are translocated across the cytoplasmic membrane), and thus conserves the redox energy in a proton gradient. This chain is NADH-quinone oxidoreductase subunit C/D, found in Pseudomonas putida (strain ATCC 700007 / DSM 6899 / JCM 31910 / BCRC 17059 / LMG 24140 / F1).